The following is a 206-amino-acid chain: MNNNFQNNIFWQKHSITRLKREKKNGHKSIVLWFTGLSGSGKSTIANFLEEILFKNGINSYLLDGDNIRSGLCSDLSFSLADRNENIRRIGEVVKMMLHAGLIILVSVISPYRNQREMVRQMLGKKNFLEVFIDTPIEICESRDPKKLYKQARTGQISDFTGIQCTYETPNTPDVLLKGTDSLKNNSKKLIKILYNHNIISFINID.

Residue 36-43 coordinates ATP; sequence GLSGSGKS. Catalysis depends on S110, which acts as the Phosphoserine intermediate.

Belongs to the APS kinase family.

It catalyses the reaction adenosine 5'-phosphosulfate + ATP = 3'-phosphoadenylyl sulfate + ADP + H(+). The protein operates within sulfur metabolism; hydrogen sulfide biosynthesis; sulfite from sulfate: step 2/3. Its function is as follows. Catalyzes the synthesis of activated sulfate. The chain is Adenylyl-sulfate kinase (cysC) from Buchnera aphidicola subsp. Acyrthosiphon pisum (strain APS) (Acyrthosiphon pisum symbiotic bacterium).